Reading from the N-terminus, the 142-residue chain is FAD synthase (142 aa).

Residues 9-10, 14-17, and aspartate 92 each bind ATP; these read TF and HPGH.

The protein belongs to the archaeal FAD synthase family. Homodimer. It depends on a divalent metal cation as a cofactor.

It carries out the reaction FMN + ATP + H(+) = FAD + diphosphate. Its pathway is cofactor biosynthesis; FAD biosynthesis; FAD from FMN: step 1/1. In terms of biological role, catalyzes the transfer of the AMP portion of ATP to flavin mononucleotide (FMN) to produce flavin adenine dinucleotide (FAD) coenzyme. The polypeptide is FAD synthase (Haloferax volcanii (strain ATCC 29605 / DSM 3757 / JCM 8879 / NBRC 14742 / NCIMB 2012 / VKM B-1768 / DS2) (Halobacterium volcanii)).